The primary structure comprises 384 residues: tRNA-specific 2-thiouridylase MnmA (384 aa).

ATP contacts are provided by residues 9–16 (GMSGGVDS) and M35. The interaction with target base in tRNA stretch occupies residues 95–97 (NPD). The Nucleophile role is filled by C100. C100 and C196 are oxidised to a cystine. Position 124 (G124) interacts with ATP. Residues 146 to 148 (KDQ) form an interaction with tRNA region. C196 functions as the Cysteine persulfide intermediate in the catalytic mechanism. The interaction with tRNA stretch occupies residues 308-309 (RY).

The protein belongs to the MnmA/TRMU family.

It is found in the cytoplasm. It carries out the reaction S-sulfanyl-L-cysteinyl-[protein] + uridine(34) in tRNA + AH2 + ATP = 2-thiouridine(34) in tRNA + L-cysteinyl-[protein] + A + AMP + diphosphate + H(+). Its function is as follows. Catalyzes the 2-thiolation of uridine at the wobble position (U34) of tRNA, leading to the formation of s(2)U34. This is tRNA-specific 2-thiouridylase MnmA from Paraburkholderia phymatum (strain DSM 17167 / CIP 108236 / LMG 21445 / STM815) (Burkholderia phymatum).